A 546-amino-acid chain; its full sequence is ATP synthase F(1) complex catalytic subunit beta, mitochondrial (546 aa).

The transit peptide at 1-45 directs the protein to the mitochondrion; it reads MLGFVGRVAATSASGALRGLGPSPLPQVKVLLRASPAALQSARDY. An N6-acetyllysine; alternate mark is found at Lys123, Lys132, and Lys160. N6-succinyllysine; alternate occurs at positions 123, 132, and 160. At Lys197 the chain carries N6-acetyllysine. Residues Gly208, Val209, Gly210, Lys211, Thr212, and Val213 each contribute to the ADP site. An ATP-binding site is contributed by Gly208. Residues Gly208, Val209, Gly210, Lys211, and Thr212 each contribute to the phosphate site. Gly210, Lys211, Thr212, and Val213 together coordinate ATP. Position 212 (Thr212) interacts with Mg(2+). Glu237 is a Mg(2+) binding site. Arg238 provides a ligand contact to ATP. N6-acetyllysine; alternate is present on residues Lys258 and Lys263. Residues Lys258 and Lys263 each carry the N6-succinyllysine; alternate modification. Phosphothreonine is present on Thr311. Lys425 carries the N6-acetyllysine modification. Phosphoserine is present on Ser432. N6-acetyllysine occurs at positions 479 and 484. Lys521 is modified (N6-acetyllysine; alternate). Lys521 carries the post-translational modification N6-succinyllysine; alternate. Residues 521 to 546 are disordered; the sequence is KLAEEHSATQTSPSPKGAAAXXXRVV.

Belongs to the ATPase alpha/beta chains family. In terms of assembly, homotrimer. Component of the ATP synthase complex composed at least of ATP5F1A/subunit alpha, ATP5F1B/subunit beta, ATP5MC1/subunit c (homooctomer), MT-ATP6/subunit a, MT-ATP8/subunit 8, ATP5ME/subunit e, ATP5MF/subunit f, ATP5MG/subunit g, ATP5MK/subunit k, ATP5MJ/subunit j, ATP5F1C/subunit gamma, ATP5F1D/subunit delta, ATP5F1E/subunit epsilon, ATP5PF/subunit F6, ATP5PB/subunit b, ATP5PD/subunit d, ATP5PO/subunit OSCP. ATP synthase complex consists of a soluble F(1) head domain (subunits alpha(3) and beta(3)) - the catalytic core - and a membrane F(0) domain - the membrane proton channel (subunits c, a, 8, e, f, g, k and j). These two domains are linked by a central stalk (subunits gamma, delta, and epsilon) rotating inside the F1 region and a stationary peripheral stalk (subunits F6, b, d, and OSCP). Interacts with PPIF. Interacts with BCL2L1 isoform BCL-X(L); the interaction mediates the association of BCL2L1 isoform BCL-X(L) with the mitochondrial membrane F(1)F(0) ATP synthase and enhances neurons metabolic efficiency. Interacts with CLN5 and PPT1. Interacts with S100A1; this interaction increases F1-ATPase activity. Interacts with MTLN. Interacts with TTC5/STRAP; the interaction results in decreased mitochondrial ATP production.

Its subcellular location is the mitochondrion inner membrane. The enzyme catalyses ATP + H2O + 4 H(+)(in) = ADP + phosphate + 5 H(+)(out). Catalytic subunit beta, of the mitochondrial membrane ATP synthase complex (F(1)F(0) ATP synthase or Complex V) that produces ATP from ADP in the presence of a proton gradient across the membrane which is generated by electron transport complexes of the respiratory chain. ATP synthase complex consist of a soluble F(1) head domain - the catalytic core - and a membrane F(1) domain - the membrane proton channel. These two domains are linked by a central stalk rotating inside the F(1) region and a stationary peripheral stalk. During catalysis, ATP synthesis in the catalytic domain of F(1) is coupled via a rotary mechanism of the central stalk subunits to proton translocation. In vivo, can only synthesize ATP although its ATP hydrolase activity can be activated artificially in vitro. With the subunit alpha (ATP5F1A), forms the catalytic core in the F(1) domain. The sequence is that of ATP synthase F(1) complex catalytic subunit beta, mitochondrial from Canis lupus familiaris (Dog).